The following is an 88-amino-acid chain: UPF0297 protein GTNG_2488 (88 aa).

It belongs to the UPF0297 family.

The chain is UPF0297 protein GTNG_2488 from Geobacillus thermodenitrificans (strain NG80-2).